Consider the following 341-residue polypeptide: Paired box protein Pax-9 (341 aa).

Positions 4–130 form a DNA-binding region, paired; sequence AFGEVNQLGG…SSISRILRNK (127 aa). The PAI subdomain stretch occupies residues 7–63; it reads EVNQLGGVFVNGRPLPNAIRLRIVELAQLGIRPCDISRQLRVSHGCVSKILARYNET. An RED subdomain region spans residues 82-130; sequence TVVKHIRTYKQRDPGIFAWEIRDRLLADGVCDKYNVPSVSSISRILRNK. The interaction with KDM5B stretch occupies residues 168 to 189; sequence AAAAKVPTPPGVPAIPGSVAMP.

In terms of assembly, interacts with KDM5B.

The protein resides in the nucleus. Transcription factor required for normal development of thymus, parathyroid glands, ultimobranchial bodies, teeth, skeletal elements of skull and larynx as well as distal limbs. The chain is Paired box protein Pax-9 (PAX9) from Callithrix jacchus (White-tufted-ear marmoset).